We begin with the raw amino-acid sequence, 502 residues long: T-complex protein 11-like X-linked protein 1 (502 aa).

Positions Met1–Cys36 are disordered.

Belongs to the TCP11 family.

This chain is T-complex protein 11-like X-linked protein 1, found in Homo sapiens (Human).